The primary structure comprises 135 residues: Interleukin-4 (135 aa).

A signal peptide spans 1-24; that stretch reads MGLTYQLIPVLVCLLVCTSHLVHG. Disulfide bonds link Cys27–Cys135, Cys48–Cys85, and Cys70–Cys105. N-linked (GlcNAc...) asparagine glycosylation is present at Asn62.

The protein belongs to the IL-4/IL-13 family.

It is found in the secreted. Its function is as follows. Participates in at least several B-cell activation processes as well as of other cell types. It is a costimulator of DNA-synthesis. It induces the expression of class II MHC molecules on resting B-cells. It enhances both secretion and cell surface expression of IgE and IgG1. It also regulates the expression of the low affinity Fc receptor for IgE (CD23) on both lymphocytes and monocytes. Positively regulates IL31RA expression in macrophages. Stimulates autophagy in dendritic cells by interfering with mTORC1 signaling and through the induction of RUFY4. In Bubalus bubalis (Domestic water buffalo), this protein is Interleukin-4 (IL4).